Consider the following 123-residue polypeptide: MPTIQQLIRSERQTIQKTKSPALKSCPQRRGVCTRVYTTTPKKPNSALRKVARVRLTSGFEVTAYIPGIGHNIQEHSVVLLRGGRVKDLPGVRYHIIRGTLDAAGVKNRKQSRSKYGAKKPKE.

The segment at 103-123 is disordered; the sequence is AAGVKNRKQSRSKYGAKKPKE. Residues 107–123 show a composition bias toward basic residues; the sequence is KNRKQSRSKYGAKKPKE.

It belongs to the universal ribosomal protein uS12 family. As to quaternary structure, part of the 30S ribosomal subunit.

The protein localises to the plastid. Its subcellular location is the chloroplast. Functionally, with S4 and S5 plays an important role in translational accuracy. Located at the interface of the 30S and 50S subunits. The polypeptide is Small ribosomal subunit protein uS12c (rps12) (Guillardia theta (Cryptophyte)).